Here is a 134-residue protein sequence, read N- to C-terminus: Small ribosomal subunit protein bS16 (134 aa).

Residues 79 to 134 form a disordered region; the sequence is AGIAKRPSRNNPTKGEPGKKAQERLALAKQAEEEAAAKAAEAAAAAAAPAEEAASE. A compositionally biased stretch (low complexity) spans 115 to 134; that stretch reads AKAAEAAAAAAAPAEEAASE.

This sequence belongs to the bacterial ribosomal protein bS16 family.

The protein is Small ribosomal subunit protein bS16 of Brucella suis (strain ATCC 23445 / NCTC 10510).